We begin with the raw amino-acid sequence, 971 residues long: MELSEGNLQGLTEYLKKTLDPDPAVRRPAEKYLESVEGNQNYPLLLLTLVERSQDNVIKVCSAVTFKNYIKRNWRIVEDESNKICEADRIAVKSSIINLMLRSPEQIQKQLSDAISIIGREDFPQKWPNLLTEMVNRFQSGDFHVINGVLHTAHSLFKRYRHEFKSSELWTEIKLVLDTFAGPLTDLFKATIELCNTHANDVGALKVLFSSLNLIAKLFHSLNFQDLPEFFEDNMETWMTNFHNLLTLDNKLLQTDDEEEAGLLELLKSQICDNAALYAQKYDEEFQPYLPRFVTAIWNLLVTTGQEVKYDLLVSNAIQFLASVCERPHYKNLFEDPSTLTSICEKVIVPNMEFRAADEEAFEDNSEEYIRRDLEGSDIDTRRRAACDLVRGLCKFFEGPVTNIFSGYVNSMLQEYAKNPSVNWKHKDAAIYLVTSLASKAQTQKHGITQANELVNLTEFFVNHILPDLKSANINQYPVLKADGIKYIMFFRSQIPREQLLVTIPLLIAYLQAESIVVHTYAAHALERFFTMKGAATTTLIVAADMMPYVELLLANLFKALSLPGSTENEYIMKAIMRSFSLLQEAIIPYIPSVISQLTQKLLAVSKNPSKPHFNHYMFEAICLSIRITCRANPAAVASFEDALFLVFTEILQSDVQEFIPYVFQVMSLLLEIHTTDIPPSYMALFPHLLQPVLWERTGNIPPLVRLLQAYLERGATTIAASASDKIPGLLGVFQKLIASKANDHQGFYLLNSIIEHLPAECIEQYKRQIFIVLFQRLQSSKTTKFVKSFLVFLNLFCIKFGAIALQEMFDSIQPKMFGMVVEKIIIPEIQKVSGPIEKKICAVGLTKVLTECPVMMDTEYTKLWTPLLQALIGLFELPEDDTIPDDEHFIDIEDTPGYQAAFSQLAFAGKKEHDPIGEMVNNPKILLAQSLHKLSTACPGRVPSMISTSLNAEALQFLQGYLQAGSVSLV.

The 74-residue stretch at 29 to 102 folds into the Importin N-terminal domain; it reads AEKYLESVEG…KSSIINLMLR (74 aa).

Belongs to the XPO2/CSE1 family.

It localises to the cytoplasm. The protein resides in the nucleus. Its function is as follows. Export receptor for importin alpha. Mediates importin-alpha re-export from the nucleus to the cytoplasm after import substrates have been released into the nucleoplasm. In Xenopus laevis (African clawed frog), this protein is Exportin-2 (cse1l).